The sequence spans 163 residues: Methyl-CpG-binding domain-containing protein 3 (163 aa).

Residues 6–56 (TTLIDSYAAQCWKCLKVRSIESQEDYEEIRSKTLEKFFECKRCEEPGDMVM) form a CW-type zinc finger. Residues 65 to 137 (WFQDEHSIPK…EEVSFAAPKR (73 aa)) form the MBD domain. The segment at 140 to 163 (LKKKPVDSHSSSRNTEEDGVSRDA) is disordered. Over residues 153 to 163 (NTEEDGVSRDA) the composition is skewed to basic and acidic residues.

It is found in the nucleus. In terms of biological role, probable transcriptional regulator. This Arabidopsis thaliana (Mouse-ear cress) protein is Methyl-CpG-binding domain-containing protein 3 (MBD3).